Consider the following 370-residue polypeptide: Phosphate acyltransferase (370 aa).

This sequence belongs to the PlsX family. As to quaternary structure, homodimer. Probably interacts with PlsY.

The protein resides in the cytoplasm. It catalyses the reaction a fatty acyl-[ACP] + phosphate = an acyl phosphate + holo-[ACP]. It functions in the pathway lipid metabolism; phospholipid metabolism. In terms of biological role, catalyzes the reversible formation of acyl-phosphate (acyl-PO(4)) from acyl-[acyl-carrier-protein] (acyl-ACP). This enzyme utilizes acyl-ACP as fatty acyl donor, but not acyl-CoA. This chain is Phosphate acyltransferase, found in Paracoccus denitrificans (strain Pd 1222).